The sequence spans 972 residues: DNA topoisomerase 1 (972 aa).

2 disordered regions span residues 1–210 (MSGD…VFVK) and 300–416 (HEQS…RQKA). Residues 11–31 (IHIQNGGSCEVVQSNGVTTNG) are compositionally biased toward polar residues. The segment covering 32–50 (HGHHHHHHSSSSSSSKHKS) has biased composition (basic residues). Composition is skewed to basic and acidic residues over residues 51–65 (SSKD…EHKS), 72–86 (SKEH…DRHK), and 93–103 (KHRDKDKERDG). The segment covering 104-114 (SSNSHRSGSSS) has biased composition (low complexity). The segment covering 125-138 (SKHKSSSGHHKRSS) has biased composition (basic residues). Residues 139 to 151 (KDKERRDKDKDRG) are compositionally biased toward basic and acidic residues. Residues 173 to 183 (SHKSSSSSSSS) are compositionally biased toward low complexity. Phosphoserine is present on Ser303. Tyr304 carries the post-translational modification Phosphotyrosine. Residues 316–330 (HDDDADEMNDDEEDV) are compositionally biased toward acidic residues. Interaction with DNA regions lie at residues 648–649 (KY), 711–716 (RAGNEK), and 807–809 (TAK). In terms of domain architecture, Topo IB-type catalytic spans 655-972 (SSKLKGEKDH…VHMADENYRF (318 aa)). Catalysis depends on Tyr930, which acts as the O-(3'-phospho-DNA)-tyrosine intermediate.

This sequence belongs to the type IB topoisomerase family. Interacts with Topors.

The protein resides in the nucleus. The protein localises to the cytoplasm. The catalysed reaction is ATP-independent breakage of single-stranded DNA, followed by passage and rejoining.. Its function is as follows. Releases the supercoiling and torsional tension of DNA introduced during the DNA replication and transcription by transiently cleaving and rejoining one strand of the DNA duplex. Introduces a single-strand break via transesterification at a target site in duplex DNA. The scissile phosphodiester is attacked by the catalytic tyrosine of the enzyme, resulting in the formation of a DNA-(3'-phosphotyrosyl)-enzyme intermediate and the expulsion of a 5'-OH DNA strand. The free DNA strand then undergoes passage around the unbroken strand thus removing DNA supercoils. Finally, in the religation step, the DNA 5'-OH attacks the covalent intermediate to expel the active-site tyrosine and restore the DNA phosphodiester backbone. The protein is DNA topoisomerase 1 of Drosophila melanogaster (Fruit fly).